The following is a 58-amino-acid chain: Ribulose bisphosphate carboxylase large chain (58 aa).

Residues 1–2 (MS) constitute a propeptide that is removed on maturation. An N-acetylproline modification is found at Pro3. N6,N6,N6-trimethyllysine is present on Lys14.

This sequence belongs to the RuBisCO large chain family. Type I subfamily. Heterohexadecamer of 8 large chains and 8 small chains.

The protein resides in the plastid. It is found in the chloroplast. The catalysed reaction is 2 (2R)-3-phosphoglycerate + 2 H(+) = D-ribulose 1,5-bisphosphate + CO2 + H2O. It catalyses the reaction D-ribulose 1,5-bisphosphate + O2 = 2-phosphoglycolate + (2R)-3-phosphoglycerate + 2 H(+). Its function is as follows. RuBisCO catalyzes two reactions: the carboxylation of D-ribulose 1,5-bisphosphate, the primary event in carbon dioxide fixation, as well as the oxidative fragmentation of the pentose substrate in the photorespiration process. Both reactions occur simultaneously and in competition at the same active site. The chain is Ribulose bisphosphate carboxylase large chain (rbcL) from Weinmannia silvicola (Towai).